The primary structure comprises 348 residues: Mannonate dehydratase (348 aa).

It belongs to the mannonate dehydratase family. The cofactor is Fe(2+). Requires Mn(2+) as cofactor.

The enzyme catalyses D-mannonate = 2-dehydro-3-deoxy-D-gluconate + H2O. Its pathway is carbohydrate metabolism; pentose and glucuronate interconversion. Its function is as follows. Catalyzes the dehydration of D-mannonate. The sequence is that of Mannonate dehydratase from Staphylococcus haemolyticus (strain JCSC1435).